The following is a 302-amino-acid chain: Sulfate adenylyltransferase subunit 2 (302 aa).

The protein belongs to the PAPS reductase family. CysD subfamily. Heterodimer composed of CysD, the smaller subunit, and CysN.

It catalyses the reaction sulfate + ATP + H(+) = adenosine 5'-phosphosulfate + diphosphate. The protein operates within sulfur metabolism; hydrogen sulfide biosynthesis; sulfite from sulfate: step 1/3. In terms of biological role, with CysN forms the ATP sulfurylase (ATPS) that catalyzes the adenylation of sulfate producing adenosine 5'-phosphosulfate (APS) and diphosphate, the first enzymatic step in sulfur assimilation pathway. APS synthesis involves the formation of a high-energy phosphoric-sulfuric acid anhydride bond driven by GTP hydrolysis by CysN coupled to ATP hydrolysis by CysD. The protein is Sulfate adenylyltransferase subunit 2 of Bacteroides thetaiotaomicron (strain ATCC 29148 / DSM 2079 / JCM 5827 / CCUG 10774 / NCTC 10582 / VPI-5482 / E50).